Here is a 503-residue protein sequence, read N- to C-terminus: Transforming protein rel polyprotein (503 aa).

The RHD domain maps to 16 to 305 (PYIEIFEQPR…GNKAKRQRST (290 aa)). Residue serine 275 is modified to Phosphoserine; by host PKA. Disordered stretches follow at residues 286–306 (RYLP…RSTL) and 318–342 (AVTE…KEPN). The short motif at 298–303 (KAKRQR) is the Nuclear localization signal element.

Its subcellular location is the host cytoplasm. This transforming protein appears to have a protein-kinase activity. The protein is Transforming protein rel polyprotein (V-REL) of Galliformes.